A 196-amino-acid chain; its full sequence is Inosine triphosphate pyrophosphatase 2 (196 aa).

20–25 provides a ligand contact to ITP; sequence TGNDGK. Residue Glu48 coordinates Mg(2+). Residues Lys61, 77–78, Lys94, 153–156, Lys177, and 182–183 each bind ITP; these read DT, FGWD, and PR.

This sequence belongs to the HAM1 NTPase family. Homodimer. Mg(2+) serves as cofactor. It depends on Mn(2+) as a cofactor.

Its subcellular location is the cytoplasm. It catalyses the reaction ITP + H2O = IMP + diphosphate + H(+). The catalysed reaction is dITP + H2O = dIMP + diphosphate + H(+). The enzyme catalyses XTP + H2O = XMP + diphosphate + H(+). Functionally, pyrophosphatase that hydrolyzes non-canonical purine nucleotides such as inosine triphosphate (ITP), deoxyinosine triphosphate (dITP) or xanthosine 5'-triphosphate (XTP) to their respective monophosphate derivatives. The enzyme does not distinguish between the deoxy- and ribose forms. Probably excludes non-canonical purines from RNA and DNA precursor pools, thus preventing their incorporation into RNA and DNA and avoiding chromosomal lesions. The polypeptide is Inosine triphosphate pyrophosphatase 2 (Trypanosoma cruzi (strain CL Brener)).